An 82-amino-acid chain; its full sequence is U-actitoxin-Oulsp2 (82 aa).

Positions 1 to 21 (MNTKLVVVFLLSAILFVSVTA) are cleaved as a signal peptide. Residues 22 to 46 (SRPGKDLERDEAYETYDDERPYFKR) constitute a propeptide that is removed on maturation. The 35-residue stretch at 48–82 (CKDNLPAATCSNVKANNNCSSEKYKTNCAKTCGEC) folds into the ShKT domain. Disulfide bonds link Cys48–Cys82, Cys57–Cys75, and Cys66–Cys79. The interval 70–71 (KY) is theoritically crucial for binding to potassium channels.

Belongs to the sea anemone type 1 potassium channel toxin family. Type 1b subfamily.

It is found in the secreted. The protein localises to the nematocyst. Functionally, probable toxin with unknown function. In contrast to similar toxins, this toxin does not inhibit voltage-gated potassium channels (tested at 100 nM). Does not show antimicrobial activities against bacteria and yeasts. In Oulactis sp. (Sea anemone), this protein is U-actitoxin-Oulsp2.